A 550-amino-acid chain; its full sequence is Iduronate 2-sulfatase (550 aa).

An N-terminal signal peptide occupies residues 1-25 (MPPPRTGRGLLWLGLVLSSVCVALG). A propeptide spanning residues 26 to 33 (SETQANST) is cleaved from the precursor. Residues D45, D46, and C84 each contribute to the Ca(2+) site. C84 serves as the catalytic Nucleophile. At C84 the chain carries 3-oxoalanine (Cys). N115 carries N-linked (GlcNAc...) asparagine glycosylation. H138 is an active-site residue. N-linked (GlcNAc...) asparagine glycosylation occurs at N144. C171 and C184 are disulfide-bonded. 3 N-linked (GlcNAc...) asparagine glycosylation sites follow: N246, N280, and N325. Ca(2+) contacts are provided by D334 and H335. C422 and C432 are joined by a disulfide. Residues N513 and N537 are each glycosylated (N-linked (GlcNAc...) asparagine).

The protein belongs to the sulfatase family. In terms of assembly, monomer. The 58-kDa mature form is composed of two chains resulting from proteolitic processing, the 42-kDa chain and the 14-kDa chain that remain stably associated and form the 58-kDa intermediate form which is enzymatically active. Requires Ca(2+) as cofactor. In terms of processing, synthesized as a 75-kDa precursor form in the endoplasmic reticulum (ER), and then processed by proteolytic cleavage through various intermediates to yield a 55-kDa mature form, with the release of an 18 kDa polypeptide. Post-translationally, the conversion to 3-oxoalanine (also known as C-formylglycine, FGly), of a serine or cysteine residue in prokaryotes and of a cysteine residue in eukaryotes, is critical for catalytic activity. Liver, kidney, lung, and placenta.

It localises to the lysosome. It catalyses the reaction Hydrolysis of the 2-sulfate groups of the L-iduronate 2-sulfate units of dermatan sulfate, heparan sulfate and heparin.. In terms of biological role, lysosomal enzyme involved in the degradation pathway of dermatan sulfate and heparan sulfate. In Homo sapiens (Human), this protein is Iduronate 2-sulfatase (IDS).